A 487-amino-acid polypeptide reads, in one-letter code: NAD-dependent histone deacetylase HST3 (487 aa).

The region spanning 15–336 (PADTSIKLHE…FLTQEQLDSE (322 aa)) is the Deacetylase sirtuin-type domain. NAD(+)-binding positions include 40-59 (GAGI…DGLY) and 129-132 (QNID). H167 functions as the Proton acceptor in the catalytic mechanism. C175, C178, C200, and C203 together coordinate Zn(2+). NAD(+)-binding positions include 261–263 (GTS), 291–293 (NKT), and C312. Basic and acidic residues predominate over residues 397-406 (VESVSVKEEP). The segment at 397-487 (VESVSVKEEP…ARKGITLDQH (91 aa)) is disordered. Residues 415–425 (HKPKQATKLKR) show a composition bias toward basic residues. Over residues 448–459 (DQLSSPASSING) the composition is skewed to polar residues.

Belongs to the sirtuin family. Class I subfamily. Zn(2+) serves as cofactor.

Its subcellular location is the cytoplasm. It localises to the nucleus. The enzyme catalyses N(6)-acetyl-L-lysyl-[protein] + NAD(+) + H2O = 2''-O-acetyl-ADP-D-ribose + nicotinamide + L-lysyl-[protein]. NAD-dependent histone deacetylase, which could function in telomeric silencing, cell cycle progression and chromosome stability. This chain is NAD-dependent histone deacetylase HST3 (HST3), found in Candida albicans (strain SC5314 / ATCC MYA-2876) (Yeast).